We begin with the raw amino-acid sequence, 279 residues long: DegV domain-containing protein CA_C0701 (279 aa).

Positions 4 to 277 constitute a DegV domain; sequence IKIVTDSTCD…TKACGVFFIE (274 aa). Positions 62 and 94 each coordinate hexadecanoate.

May bind long-chain fatty acids, such as palmitate, and may play a role in lipid transport or fatty acid metabolism. This is DegV domain-containing protein CA_C0701 from Clostridium acetobutylicum (strain ATCC 824 / DSM 792 / JCM 1419 / IAM 19013 / LMG 5710 / NBRC 13948 / NRRL B-527 / VKM B-1787 / 2291 / W).